The chain runs to 341 residues: GTP-binding protein REM 2 (341 aa).

Residues 1 to 13 show a composition bias toward acidic residues; that stretch reads MHTDLDTDMDADT. Disordered regions lie at residues 1 to 72 and 84 to 106; these read MHTD…SMPV and VDELDWPPQASSSGSSDSLGSGE. The span at 18 to 32 shows a compositional bias: polar residues; the sequence is LCSSSSRQASPSGTP. Residue Ser-27 is modified to Phosphoserine. The span at 43-54 shows a compositional bias: basic and acidic residues; sequence QKPEKLLAELDR. Over residues 94–105 the composition is skewed to low complexity; sequence SSSGSSDSLGSG. Residues 122–129, 230–233, and 261–262 each bind GTP; these read GESGVGKS, NKSD, and AA. The segment at 282–309 is disordered; it reads RGRGHAGGQRPEPSSPDGPAPPTRRESL. Over residues 294 to 303 the composition is skewed to pro residues; that stretch reads PSSPDGPAPP. Ser-296 carries the phosphoserine modification.

Belongs to the small GTPase superfamily. RGK family. In terms of tissue distribution, expressed in brain and kidney.

The protein localises to the cell membrane. Binds GTP saturably and exhibits a low intrinsic rate of GTP hydrolysis. This is GTP-binding protein REM 2 (Rem2) from Rattus norvegicus (Rat).